Reading from the N-terminus, the 333-residue chain is Serine/threonine-protein phosphatase PP1-beta (333 aa).

Positions 63, 65, 91, and 123 each coordinate Mn(2+). Histidine 124 (proton donor) is an active-site residue. The Mn(2+) site is built by histidine 172 and histidine 247. The tract at residues 306–333 is disordered; the sequence is GAGGVGSNRPVTPPRNAPAAQPKKGAKK. Positions 322-333 are enriched in low complexity; it reads APAAQPKKGAKK.

It belongs to the PPP phosphatase family. PP-1 subfamily. Interacts with lab-1; the interaction is direct. Interacts with knl-1; the interaction is direct. Mn(2+) is required as a cofactor. In terms of tissue distribution, expressed in gonads, nervous system, intestine and muscles.

The protein resides in the cytoplasm. It is found in the nucleus. The enzyme catalyses O-phospho-L-seryl-[protein] + H2O = L-seryl-[protein] + phosphate. It catalyses the reaction O-phospho-L-threonyl-[protein] + H2O = L-threonyl-[protein] + phosphate. Inhibited by okadaic acid. Serine/threonine-protein phosphatase essential for chromosomal dynamics during meiosis and mitosis. During meiosis, promotes chromosomal cohesion and germline immortality via a small RNA-mediated genome silencing pathway. Antagonizes the function of air-2 kinase during meiosis I and mitosis to promote chromatid cohesion and spindle attachment. Dephosphorylates histone H3 at 'Ser-10'. Dephosphorylates histone H3 at 'Thr-3'. Also involved in the activation of chloride channel clh-3 during cell swelling and meiotic maturation. Promotes small RNA-mediated genome silencing over multiple generations. Essential for embryogenesis. The protein is Serine/threonine-protein phosphatase PP1-beta of Caenorhabditis elegans.